Here is a 365-residue protein sequence, read N- to C-terminus: tRNA/tmRNA (uracil-C(5))-methyltransferase (365 aa).

5 residues coordinate S-adenosyl-L-methionine: glutamine 189, tyrosine 217, asparagine 222, glutamate 238, and aspartate 298. Cysteine 323 (nucleophile) is an active-site residue. Glutamate 357 acts as the Proton acceptor in catalysis.

It belongs to the class I-like SAM-binding methyltransferase superfamily. RNA M5U methyltransferase family. TrmA subfamily.

The enzyme catalyses uridine(54) in tRNA + S-adenosyl-L-methionine = 5-methyluridine(54) in tRNA + S-adenosyl-L-homocysteine + H(+). The catalysed reaction is uridine(341) in tmRNA + S-adenosyl-L-methionine = 5-methyluridine(341) in tmRNA + S-adenosyl-L-homocysteine + H(+). Dual-specificity methyltransferase that catalyzes the formation of 5-methyluridine at position 54 (m5U54) in all tRNAs, and that of position 341 (m5U341) in tmRNA (transfer-mRNA). In Saccharophagus degradans (strain 2-40 / ATCC 43961 / DSM 17024), this protein is tRNA/tmRNA (uracil-C(5))-methyltransferase.